The following is a 168-amino-acid chain: 3'-5' exoribonuclease MT2234.1 (168 aa).

Asp6 contributes to the Mg(2+) binding site. The tract at residues 6–9 is RNA binding; the sequence is DTEF.

As to quaternary structure, homodimer. Mg(2+) is required as a cofactor.

Functionally, exonuclease that cleaves single-stranded 3' overhangs of double-stranded RNA. In Mycobacterium tuberculosis (strain CDC 1551 / Oshkosh), this protein is 3'-5' exoribonuclease MT2234.1.